Here is a 402-residue protein sequence, read N- to C-terminus: Multidrug resistance protein MdtH (402 aa).

Over 1–12 (MSRVSQARNLGK) the chain is Cytoplasmic. A helical membrane pass occupies residues 13–33 (YFLLIDNMLVVLGFFVVFPLI). The Periplasmic portion of the chain corresponds to 34–98 (SIRFVDQMGW…GFATMGIAHE (65 aa)). The chain crosses the membrane as a helical span at residues 99–116 (PWLLWFSCLLSGLGGTLF). Over 117 to 138 (DPPRSALVVKLIRPQQRGRFFS) the chain is Cytoplasmic. The chain crosses the membrane as a helical span at residues 139–159 (LLMMQDSAGAVIGALLGSWLL). The Periplasmic segment spans residues 160-164 (QYDFR). A helical membrane pass occupies residues 165 to 185 (LVCATGAVLFVLCAAFNAWLL). The Cytoplasmic segment spans residues 186 to 213 (PAWKLSTVRTPVREGMTRVMRDKRFVTY). Residues 214–234 (VLTLAGYYMLAVQVMLMLPIM) traverse the membrane as a helical segment. Topologically, residues 235–243 (VNDVAGAPS) are periplasmic. A helical transmembrane segment spans residues 244–264 (AVKWMYAIEACLSLTLLYPIA). The Cytoplasmic portion of the chain corresponds to 265 to 276 (RWSEKHFRLEHR). A helical membrane pass occupies residues 277 to 297 (LMAGLLIMSLSMMPVGMVSGL). Topologically, residues 298–299 (QQ) are periplasmic. The helical transmembrane segment at 300-320 (LFTLICLFYIGSIIAEPARET) threads the bilayer. At 321 to 339 (LSASLADARARGSYMGFSR) the chain is on the cytoplasmic side. A helical transmembrane segment spans residues 340–360 (LGLAIGGAIGYIGGGWLFDLG). The Periplasmic segment spans residues 361 to 367 (KSAHQPE). A helical membrane pass occupies residues 368 to 388 (LPWMMLGIIGIFTFLALGWQF). The Cytoplasmic segment spans residues 389-402 (SQKRTARRLLERDA).

This sequence belongs to the major facilitator superfamily. DHA1 family. MdtH (TC 2.A.1.2.21) subfamily.

It is found in the cell inner membrane. Its function is as follows. Confers resistance to norfloxacin and enoxacin. This chain is Multidrug resistance protein MdtH, found in Escherichia coli O7:K1 (strain IAI39 / ExPEC).